A 1199-amino-acid chain; its full sequence is DNA-directed RNA polymerase subunit beta (1199 aa).

Residues 1175-1199 (EEKKAHEAAAQATDGKSANSTDDKK) form a disordered region. The span at 1188 to 1199 (DGKSANSTDDKK) shows a compositional bias: polar residues.

This sequence belongs to the RNA polymerase beta chain family. The RNAP catalytic core consists of 2 alpha, 1 beta, 1 beta' and 1 omega subunit. When a sigma factor is associated with the core the holoenzyme is formed, which can initiate transcription.

The catalysed reaction is RNA(n) + a ribonucleoside 5'-triphosphate = RNA(n+1) + diphosphate. DNA-dependent RNA polymerase catalyzes the transcription of DNA into RNA using the four ribonucleoside triphosphates as substrates. This chain is DNA-directed RNA polymerase subunit beta, found in Lacticaseibacillus casei (strain BL23) (Lactobacillus casei).